The chain runs to 586 residues: Frizzled-10-A (586 aa).

The N-terminal stretch at 1–26 is a signal peptide; sequence MDVSGVTGLLRGTALLLVLAAALCSA. At 27-230 the chain is on the extracellular side; sequence ISSINPDRSG…DVYWSKDDKK (204 aa). In terms of domain architecture, FZ spans 35–156; sequence SGDGRCQAIE…NDPNYLCMEA (122 aa). Cystine bridges form between cysteine 40–cysteine 101, cysteine 48–cysteine 94, cysteine 85–cysteine 123, cysteine 112–cysteine 153, and cysteine 116–cysteine 140. Residue asparagine 54 is glycosylated (N-linked (GlcNAc...) asparagine). Asparagine 159 is a glycosylation site (N-linked (GlcNAc...) asparagine). The disordered stretch occupies residues 161-199; the sequence is TDETPRGSSMLPPIFRPQRPSSGHEIYPKDPTSRSSCEN. The chain crosses the membrane as a helical span at residues 231-251; sequence FAFIWIAIWSILCFFSSAFTV. Over 252–267 the chain is Cytoplasmic; that stretch reads LTFLVDPLRFKYPERP. Residues 268 to 288 traverse the membrane as a helical segment; it reads IIFLSMCYCVYSVGYIIRLFA. Over 289 to 315 the chain is Extracellular; it reads GADSIACDRDSGQLYVIQEGLESTGCT. The chain crosses the membrane as a helical span at residues 316–336; it reads IVFLILYYFGMASSLWWVILT. The Cytoplasmic portion of the chain corresponds to 337–356; sequence LTWFLAAGKKWGHEAIEANS. The chain crosses the membrane as a helical span at residues 357 to 377; that stretch reads SYFHLAAWAIPAVKTIMILVM. Residues 378–401 are Extracellular-facing; it reads RRVAGDELTGVCYVGSMDVNALTG. A helical membrane pass occupies residues 402–422; the sequence is FVLIPLACYLIIGTSFILSGF. The Cytoplasmic segment spans residues 423–448; the sequence is VALFHIRRVMKTGGENTDKLEKLMVR. The helical transmembrane segment at 449–469 threads the bilayer; sequence IGVFSVLYTVPATCVIACYFY. Residues 470-507 lie on the Extracellular side of the membrane; it reads ERLNMDFWKILATQDKCKMDSQTKTLDCTMTSSIPAVE. Residues 508-528 form a helical membrane-spanning segment; that stretch reads IFMVKIFMLLVVGITSGMWIW. The Cytoplasmic segment spans residues 529–586; that stretch reads TSKTVQSWQNVFSKRLKKRNRSKPASVITSAGIYKKPQHPPKVHHGKYESALQSPTCV. The Lys-Thr-X-X-X-Trp motif, mediates interaction with the PDZ domain of Dvl family members motif lies at 531-536; it reads KTVQSW. Positions 563–586 are disordered; it reads KKPQHPPKVHHGKYESALQSPTCV. Residues 564–573 show a composition bias toward basic residues; sequence KPQHPPKVHH. Residues 584–586 carry the PDZ-binding motif; sequence TCV.

Belongs to the G-protein coupled receptor Fz/Smo family. As to expression, expressed in liver, lung, brain, testis, stomach, kidney, eye, skeletal muscle and skin.

It localises to the cell membrane. Receptor for Wnt proteins. Most of frizzled receptors are coupled to the beta-catenin canonical signaling pathway, which leads to the activation of disheveled proteins, inhibition of GSK-3 kinase, nuclear accumulation of beta-catenin and activation of Wnt target genes. A second signaling pathway involving PKC and calcium fluxes has been seen for some family members, but it is not yet clear if it represents a distinct pathway or if it can be integrated in the canonical pathway, as PKC seems to be required for Wnt-mediated inactivation of GSK-3 kinase. Both pathways seem to involve interactions with G-proteins. May be involved in transduction and intercellular transmission of polarity information during tissue morphogenesis and/or in differentiated tissues. Activated by Wnt8. Could have an antagonizing activity in the morphogenesis during development. This Xenopus laevis (African clawed frog) protein is Frizzled-10-A (fzd10-a).